The primary structure comprises 212 residues: ATP phosphoribosyltransferase (212 aa).

Belongs to the ATP phosphoribosyltransferase family. Short subfamily. In terms of assembly, heteromultimer composed of HisG and HisZ subunits.

It is found in the cytoplasm. The enzyme catalyses 1-(5-phospho-beta-D-ribosyl)-ATP + diphosphate = 5-phospho-alpha-D-ribose 1-diphosphate + ATP. It functions in the pathway amino-acid biosynthesis; L-histidine biosynthesis; L-histidine from 5-phospho-alpha-D-ribose 1-diphosphate: step 1/9. Functionally, catalyzes the condensation of ATP and 5-phosphoribose 1-diphosphate to form N'-(5'-phosphoribosyl)-ATP (PR-ATP). Has a crucial role in the pathway because the rate of histidine biosynthesis seems to be controlled primarily by regulation of HisG enzymatic activity. In Clostridium botulinum (strain Okra / Type B1), this protein is ATP phosphoribosyltransferase.